Here is a 501-residue protein sequence, read N- to C-terminus: ATP synthase subunit alpha (501 aa).

169-176 (GDRQTGKT) contacts ATP.

Belongs to the ATPase alpha/beta chains family. In terms of assembly, F-type ATPases have 2 components, CF(1) - the catalytic core - and CF(0) - the membrane proton channel. CF(1) has five subunits: alpha(3), beta(3), gamma(1), delta(1), epsilon(1). CF(0) has three main subunits: a(1), b(2) and c(9-12). The alpha and beta chains form an alternating ring which encloses part of the gamma chain. CF(1) is attached to CF(0) by a central stalk formed by the gamma and epsilon chains, while a peripheral stalk is formed by the delta and b chains.

Its subcellular location is the cell membrane. The catalysed reaction is ATP + H2O + 4 H(+)(in) = ADP + phosphate + 5 H(+)(out). In terms of biological role, produces ATP from ADP in the presence of a proton gradient across the membrane. The alpha chain is a regulatory subunit. This Streptococcus thermophilus (strain CNRZ 1066) protein is ATP synthase subunit alpha.